Here is a 378-residue protein sequence, read N- to C-terminus: Homoserine O-acetyltransferase (378 aa).

One can recognise an AB hydrolase-1 domain in the interval 54-355 (NAILVCHALS…NNPAGHDSFL (302 aa)). Ser-159 functions as the Nucleophile in the catalytic mechanism. Arg-228 is a binding site for substrate. Residues Asp-318 and His-351 contribute to the active site. Residue Asp-352 participates in substrate binding.

This sequence belongs to the AB hydrolase superfamily. MetX family. Homodimer.

It is found in the cytoplasm. The catalysed reaction is L-homoserine + acetyl-CoA = O-acetyl-L-homoserine + CoA. The protein operates within amino-acid biosynthesis; L-methionine biosynthesis via de novo pathway; O-acetyl-L-homoserine from L-homoserine: step 1/1. Functionally, transfers an acetyl group from acetyl-CoA to L-homoserine, forming acetyl-L-homoserine. This is Homoserine O-acetyltransferase from Leptospira biflexa serovar Patoc (strain Patoc 1 / Ames).